The following is a 243-amino-acid chain: Ubiquinone/menaquinone biosynthesis C-methyltransferase UbiE (243 aa).

S-adenosyl-L-methionine-binding positions include Thr-69, Asp-90, and 116–117 (DA).

Belongs to the class I-like SAM-binding methyltransferase superfamily. MenG/UbiE family.

It catalyses the reaction a 2-demethylmenaquinol + S-adenosyl-L-methionine = a menaquinol + S-adenosyl-L-homocysteine + H(+). The enzyme catalyses a 2-methoxy-6-(all-trans-polyprenyl)benzene-1,4-diol + S-adenosyl-L-methionine = a 5-methoxy-2-methyl-3-(all-trans-polyprenyl)benzene-1,4-diol + S-adenosyl-L-homocysteine + H(+). It functions in the pathway quinol/quinone metabolism; menaquinone biosynthesis; menaquinol from 1,4-dihydroxy-2-naphthoate: step 2/2. It participates in cofactor biosynthesis; ubiquinone biosynthesis. Its function is as follows. Methyltransferase required for the conversion of demethylmenaquinol (DMKH2) to menaquinol (MKH2) and the conversion of 2-polyprenyl-6-methoxy-1,4-benzoquinol (DDMQH2) to 2-polyprenyl-3-methyl-6-methoxy-1,4-benzoquinol (DMQH2). This is Ubiquinone/menaquinone biosynthesis C-methyltransferase UbiE from Cupriavidus metallidurans (strain ATCC 43123 / DSM 2839 / NBRC 102507 / CH34) (Ralstonia metallidurans).